The chain runs to 142 residues: Large ribosomal subunit protein uL11 (142 aa).

The segment at 86–105 (LKSGSKEPGKQSAGQISRAK) is disordered.

It belongs to the universal ribosomal protein uL11 family. Part of the ribosomal stalk of the 50S ribosomal subunit. Interacts with L10 and the large rRNA to form the base of the stalk. L10 forms an elongated spine to which L12 dimers bind in a sequential fashion forming a multimeric L10(L12)X complex. Post-translationally, one or more lysine residues are methylated.

Forms part of the ribosomal stalk which helps the ribosome interact with GTP-bound translation factors. The chain is Large ribosomal subunit protein uL11 from Chelativorans sp. (strain BNC1).